Here is a 447-residue protein sequence, read N- to C-terminus: Sulfoquinovose isomerase (447 aa).

This sequence belongs to the SqvD family.

It catalyses the reaction 6-sulfo-beta-D-quinovose = 6-deoxy-6-sulfo-D-fructose. Part of the sulfo-TK pathway, a D-sulfoquinovose degradation pathway that produces 2-hydroxyethane-1-sulfonate (isethionate). Catalyzes the isomerization of sulfoquinovose (SQ) to 6-deoxy-6-sulfo-D-fructose (SF). This is Sulfoquinovose isomerase from Clostridium sp. (strain MSTE9).